A 130-amino-acid chain; its full sequence is MGIVGVGIDLVSIPDFAEQVDQPGTVFAETFTPGERRDASDKSSSAARHLAARWAAKEAVIKAWSGSRFAQRPVLPEDIHRDIEVVTDMWGRPRVRLTGAIAEYLADVTIHVSLTHEGDTAAAVAILEAP.

2 residues coordinate Mg(2+): Asp-9 and Glu-58.

The protein belongs to the P-Pant transferase superfamily. AcpS family. Mg(2+) serves as cofactor.

It is found in the cytoplasm. It catalyses the reaction apo-[ACP] + CoA = holo-[ACP] + adenosine 3',5'-bisphosphate + H(+). Transfers the 4'-phosphopantetheine moiety from coenzyme A to a Ser of acyl-carrier-protein. This is Holo-[acyl-carrier-protein] synthase from Mycobacterium bovis (strain ATCC BAA-935 / AF2122/97).